Here is a 654-residue protein sequence, read N- to C-terminus: Cytochrome B pre-mRNA-processing protein 1 (654 aa).

Its subcellular location is the mitochondrion. Its function is as follows. Responsible for conferring a stable 5'-end on cytochrome b mRNA. The sequence is that of Cytochrome B pre-mRNA-processing protein 1 (CBP1) from Saccharomyces cerevisiae (strain ATCC 204508 / S288c) (Baker's yeast).